The chain runs to 432 residues: Short/branched chain specific acyl-CoA dehydrogenase, mitochondrial (432 aa).

The N-terminal 33 residues, 1–33 (MEGLAVRLLRGSRLLRRNFLTCLSSWKIPPHVS), are a transit peptide targeting the mitochondrion. Lysine 70 is subject to N6-acetyllysine; alternate. Residue lysine 70 is modified to N6-succinyllysine; alternate. FAD contacts are provided by residues 174–183 (FCLSEAGAGS) and 207–209 (WIS). Serine 183 is a substrate binding site. The residue at position 183 (serine 183) is a Phosphoserine. Residues tyrosine 229 and tyrosine 283 each coordinate substrate. Lysine 284 bears the N6-acetyllysine; alternate mark. N6-succinyllysine; alternate is present on lysine 284. 291–294 (NEGR) serves as a coordination point for substrate. FAD contacts are provided by residues arginine 319, glutamine 330, and 387-391 (EWMGG). Glutamate 414 (proton acceptor) is an active-site residue. 416–418 (ASN) is a binding site for FAD. Lysine 426 is subject to N6-acetyllysine.

The protein belongs to the acyl-CoA dehydrogenase family. As to quaternary structure, homotetramer. The cofactor is FAD. Ubiquitously expressed.

The protein localises to the mitochondrion matrix. The enzyme catalyses 2-methylbutanoyl-CoA + oxidized [electron-transfer flavoprotein] + H(+) = (2E)-2-methylbut-2-enoyl-CoA + reduced [electron-transfer flavoprotein]. It catalyses the reaction (2S)-2-methylbutanoyl-CoA + oxidized [electron-transfer flavoprotein] + H(+) = (2E)-2-methylbut-2-enoyl-CoA + reduced [electron-transfer flavoprotein]. It carries out the reaction (2R)-2-methylbutanoyl-CoA + oxidized [electron-transfer flavoprotein] + H(+) = ethylacryloyl-CoA + reduced [electron-transfer flavoprotein]. The catalysed reaction is butanoyl-CoA + oxidized [electron-transfer flavoprotein] + H(+) = (2E)-butenoyl-CoA + reduced [electron-transfer flavoprotein]. The enzyme catalyses 2-methylpropanoyl-CoA + oxidized [electron-transfer flavoprotein] + H(+) = 2-methylpropenoyl-CoA + reduced [electron-transfer flavoprotein]. It catalyses the reaction hexanoyl-CoA + oxidized [electron-transfer flavoprotein] + H(+) = (2E)-hexenoyl-CoA + reduced [electron-transfer flavoprotein]. It carries out the reaction 2-methylhexanoyl-CoA + oxidized [electron-transfer flavoprotein] + H(+) = 2-methylhexenoyl-CoA + reduced [electron-transfer flavoprotein]. The catalysed reaction is valproyl-CoA + oxidized [electron-transfer flavoprotein] + H(+) = (2E)-2-propylpent-2-enoyl-CoA + reduced [electron-transfer flavoprotein]. Its pathway is lipid metabolism; mitochondrial fatty acid beta-oxidation. It participates in amino-acid degradation; L-isoleucine degradation. With respect to regulation, competitively inhibited by valproyl-CoA. Short and branched chain specific acyl-CoA dehydrogenase that catalyzes the removal of one hydrogen from C-2 and C-3 of the fatty acyl-CoA thioester, resulting in the formation of trans-2-enoyl-CoA. Among the different mitochondrial acyl-CoA dehydrogenases, acts specifically on short and branched chain acyl-CoA derivatives such as (S)-2-methylbutyryl-CoA as well as short straight chain acyl-CoAs such as butyryl-CoA. Plays an important role in the metabolism of L-isoleucine by catalyzing the dehydrogenation of 2-methylbutyryl-CoA, one of the steps of the L-isoleucine catabolic pathway. Can also act on valproyl-CoA, a metabolite of valproic acid, an antiepileptic drug. The polypeptide is Short/branched chain specific acyl-CoA dehydrogenase, mitochondrial (Homo sapiens (Human)).